Here is a 153-residue protein sequence, read N- to C-terminus: Ribonuclease K6 (153 aa).

The first 27 residues, 1 to 27 (MVVDLPRYLPLLLLLELWEPMYLLCSQ), serve as a signal peptide directing secretion. Residue His41 is the Proton acceptor of the active site. 4 cysteine pairs are disulfide-bonded: Cys49-Cys107, Cys63-Cys117, Cys81-Cys132, and Cys88-Cys95. N-linked (GlcNAc...) asparagine glycosylation is present at Asn58. Residue 64–68 (KQINT) coordinates substrate. Asn85 carries N-linked (GlcNAc...) asparagine glycosylation. Position 89 (Lys89) interacts with substrate. Catalysis depends on His148, which acts as the Proton donor.

This sequence belongs to the pancreatic ribonuclease family. Interacts (via N-terminus) with bacterial lipopolysaccharide (LPS). As to expression, highly expressed in spleen (at protein level). Has little or no expression in healthy kidneys (at protein level). Detected at high levels in infected kidneys (at protein level). Expressed at low levels in bladder. Also detected in skeletal muscle, heart and bone marrow.

It is found in the secreted. The protein resides in the lysosome. Its subcellular location is the cytoplasmic granule. Its function is as follows. Ribonuclease which shows a preference for the pyrimidines uridine and cytosine. Has potent antibacterial activity against a range of Gram-positive and Gram-negative bacteria, including P.aeruginosa, A.baumanii, M.luteus, S.aureus, E.faecalis, E.faecium, S.saprophyticus and E.coli. Causes loss of bacterial membrane integrity, and also promotes agglutination of Gram-negative bacteria. Probably contributes to urinary tract sterility. Bactericidal activity is independent of RNase activity. This Mus musculus (Mouse) protein is Ribonuclease K6 (Rnase6).